Consider the following 178-residue polypeptide: UPF0114 protein in repA1-repA2 intergenic region (178 aa).

3 helical membrane-spanning segments follow: residues tryptophan 14 to phenylalanine 34, leucine 53 to valine 73, and tryptophan 136 to arginine 156.

This sequence belongs to the UPF0114 family.

It is found in the cell membrane. The polypeptide is UPF0114 protein in repA1-repA2 intergenic region (Buchnera aphidicola subsp. Tetraneura caerulescens).